We begin with the raw amino-acid sequence, 719 residues long: MNKDGIKNLTVVEAERELEWLAKEIARHDVLYNRDDQPEISDAEYDALRRRNAEIEALFPELIRVDSPSHKIGAAISEKFEKSVHAQPMLSLDNAFSAEDVYEFVERIRRFLRLPETQVLEITAEPKIDGLSLSLRYEKGRLVRAATRGDGTVGENVTANARTIADIPQVLQGDFPDVIEVRGEVYMGREDFQALNISQQEKGKLTFANPRNAAAGSLRQLDSRITASRKLQFFAYACGEVSEIFAESQMEMMTKLKEYGFVINPLTKVFKTVEDIISYYRDIEERRYSLNYDIDGIVYKVNDLMLQKRLGFVSRSPRWAIAHKFPAEKAMALLEDIDIQVGRTGALTPVARLTPITIGGVVVTNASLHNEDYIKGIGHKGEPIREGRDIRIGDTVIIQRAGDVIPQVVDIVLEKRQKDSSAFVFPDLCPACGSHAVREVGEAVRRCTGGLICPAQAIERIRHFVARNAFDIEGLGKKQVEFFFHAQDEALCIHTPADIFTLERRQEKSLIRLENIEGFGTVSVRKLYDAINARREIPLSRFLFALGIRHVGEVNARRLARAYQTYTAFETAAMEALMPCKQDNKEGNEAWMELTNIEGIGPQVGSAIVDFYQEAHNREVLAVLLEEITPLDEVPIMTASSPIAEKIIVFTGTLAHMSRDEAKALAERLGAKTSGSLSKKTDLLVAGPGAGSKLTKAQEFGVQVIDEEAWMRLIKGHNI.

NAD(+) contacts are provided by residues 42 to 46, 91 to 92, and Glu125; these read DAEYD and SL. Lys127 (N6-AMP-lysine intermediate) is an active-site residue. The NAD(+) site is built by Arg148, Glu184, Lys300, and Lys324. 4 residues coordinate Zn(2+): Cys429, Cys432, Cys447, and Cys453. The BRCT domain occupies 638-719; it reads TASSPIAEKI…WMRLIKGHNI (82 aa).

This sequence belongs to the NAD-dependent DNA ligase family. LigA subfamily. The cofactor is Mg(2+). Mn(2+) serves as cofactor.

It catalyses the reaction NAD(+) + (deoxyribonucleotide)n-3'-hydroxyl + 5'-phospho-(deoxyribonucleotide)m = (deoxyribonucleotide)n+m + AMP + beta-nicotinamide D-nucleotide.. Functionally, DNA ligase that catalyzes the formation of phosphodiester linkages between 5'-phosphoryl and 3'-hydroxyl groups in double-stranded DNA using NAD as a coenzyme and as the energy source for the reaction. It is essential for DNA replication and repair of damaged DNA. The polypeptide is DNA ligase (Bartonella tribocorum (strain CIP 105476 / IBS 506)).